A 49-amino-acid chain; its full sequence is Lysozyme C (49 aa).

Residues 1-49 (SKMKKCEFAKIAKEQHMDGYHGVSLADWVCLVNNESDFNTKAINRNKGI) form the C-type lysozyme domain. E35 is a catalytic residue.

The protein belongs to the glycosyl hydrolase 22 family. In terms of assembly, monomer.

The protein resides in the secreted. It carries out the reaction Hydrolysis of (1-&gt;4)-beta-linkages between N-acetylmuramic acid and N-acetyl-D-glucosamine residues in a peptidoglycan and between N-acetyl-D-glucosamine residues in chitodextrins.. Functionally, lysozymes have primarily a bacteriolytic function; those in tissues and body fluids are associated with the monocyte-macrophage system and enhance the activity of immunoagents. The sequence is that of Lysozyme C (LYZ) from Pseudocheirus peregrinus (Common ring-tailed possum).